The primary structure comprises 194 residues: MAIKLIVGLANPGAEYAATRHNAGAWYVDLLAERLRAPLREEPKFFGYTSRITLEGEDVRLLVPTTFMNLSGKAVGAMASFYRIQPDEILVAHDELDLPPGVAKFKLGGGHGGHNGLKDIISKLGNNPNFHRLRVGIGHPGDKSKVVGFVLGKPPVSEQKLIDEAIYEAARCTELWFKEGLAKATSRLHTFKAQ.

TRNA is bound at residue tyrosine 16. Histidine 21 (proton acceptor) is an active-site residue. TRNA-binding residues include phenylalanine 67, asparagine 69, and asparagine 115.

Belongs to the PTH family. As to quaternary structure, monomer.

It localises to the cytoplasm. The enzyme catalyses an N-acyl-L-alpha-aminoacyl-tRNA + H2O = an N-acyl-L-amino acid + a tRNA + H(+). Hydrolyzes ribosome-free peptidyl-tRNAs (with 1 or more amino acids incorporated), which drop off the ribosome during protein synthesis, or as a result of ribosome stalling. In terms of biological role, catalyzes the release of premature peptidyl moieties from peptidyl-tRNA molecules trapped in stalled 50S ribosomal subunits, and thus maintains levels of free tRNAs and 50S ribosomes. This Salmonella heidelberg (strain SL476) protein is Peptidyl-tRNA hydrolase.